An 880-amino-acid chain; its full sequence is Paramyosin (880 aa).

Residues 1–34 are nonhelical region; the sequence is MSGSLYRSPSAALYKSPSMSAFGGLPAAFGSMSV. A coiled-coil region spans residues 35 to 859; sequence ADLGSLTRLE…LIRAKHRHQL (825 aa). Residues 860-880 are nonhelical region; that stretch reads LRAKMLQRQKFTFSKMSNRDN.

It belongs to the paramyosin family. Homodimer.

The protein resides in the cytoplasm. It localises to the myofibril. Its function is as follows. Paramyosin is a major structural component of many thick filaments isolated from invertebrate muscles. In Brugia malayi (Filarial nematode worm), this protein is Paramyosin.